The sequence spans 178 residues: Large ribosomal subunit protein uL6 (178 aa).

The protein belongs to the universal ribosomal protein uL6 family. As to quaternary structure, part of the 50S ribosomal subunit.

This protein binds to the 23S rRNA, and is important in its secondary structure. It is located near the subunit interface in the base of the L7/L12 stalk, and near the tRNA binding site of the peptidyltransferase center. This chain is Large ribosomal subunit protein uL6, found in Methanobrevibacter smithii (strain ATCC 35061 / DSM 861 / OCM 144 / PS).